The chain runs to 531 residues: UDP-glucuronosyltransferase 1A5 (531 aa).

The first 25 residues, 1–25, serve as a signal peptide directing secretion; it reads MGLHVTLQGLAGLLLLLYALPWAEG. N-linked (GlcNAc...) asparagine glycans are attached at residues asparagine 116, asparagine 131, asparagine 139, asparagine 293, and asparagine 431. The chain crosses the membrane as a helical span at residues 489–505; the sequence is VIGFLLAIVLTVVFIVY.

Belongs to the UDP-glycosyltransferase family. In terms of assembly, homodimer. Homooligomer. Interacts with UGT1A1, UGT1A3, UGT1A4, UGT1A6, UGT1A7, UGT1A8, UGT1A9 and UGT1A10 to form heterodimers.

It localises to the endoplasmic reticulum membrane. The catalysed reaction is glucuronate acceptor + UDP-alpha-D-glucuronate = acceptor beta-D-glucuronoside + UDP + H(+). It catalyses the reaction zolasartan + UDP-alpha-D-glucuronate = zolarsartan-1-N-beta-D-glucuronide + UDP. UDP-glucuronosyltransferase (UGT) that catalyzes phase II biotransformation reactions in which lipophilic substrates are conjugated with glucuronic acid to increase the metabolite's water solubility, thereby facilitating excretion into either the urine or bile. Essential for the elimination and detoxification of drugs, xenobiotics and endogenous compounds. Involved in the glucuronidation of the AGTR1 angiotensin receptor antagonist zolarsatan, a drug which can inhibit the effect of angiotensin II. This is UDP-glucuronosyltransferase 1A5 from Rattus norvegicus (Rat).